A 509-amino-acid polypeptide reads, in one-letter code: GMP synthase [glutamine-hydrolyzing] (509 aa).

In terms of domain architecture, Glutamine amidotransferase type-1 spans 4 to 193; that stretch reads NVLILDFGSQ…LIKIAGTKAT (190 aa). The Nucleophile role is filled by Cys79. Catalysis depends on residues His167 and Glu169. The GMPS ATP-PPase domain maps to 194 to 384; the sequence is WTPGKFVDLT…LGIDKELLGR (191 aa). 221–227 serves as a coordination point for ATP; the sequence is SGGVDST.

Homodimer.

It carries out the reaction XMP + L-glutamine + ATP + H2O = GMP + L-glutamate + AMP + diphosphate + 2 H(+). It participates in purine metabolism; GMP biosynthesis; GMP from XMP (L-Gln route): step 1/1. Catalyzes the synthesis of GMP from XMP. The chain is GMP synthase [glutamine-hydrolyzing] from Christiangramia forsetii (strain DSM 17595 / CGMCC 1.15422 / KT0803) (Gramella forsetii).